Consider the following 200-residue polypeptide: ATP-dependent Clp protease proteolytic subunit 2 (200 aa).

Ser-99 (nucleophile) is an active-site residue. His-124 is an active-site residue.

Belongs to the peptidase S14 family. Fourteen ClpP subunits assemble into 2 heptameric rings which stack back to back to give a disk-like structure with a central cavity, resembling the structure of eukaryotic proteasomes.

It is found in the cytoplasm. The enzyme catalyses Hydrolysis of proteins to small peptides in the presence of ATP and magnesium. alpha-casein is the usual test substrate. In the absence of ATP, only oligopeptides shorter than five residues are hydrolyzed (such as succinyl-Leu-Tyr-|-NHMec, and Leu-Tyr-Leu-|-Tyr-Trp, in which cleavage of the -Tyr-|-Leu- and -Tyr-|-Trp bonds also occurs).. In terms of biological role, cleaves peptides in various proteins in a process that requires ATP hydrolysis. Has a chymotrypsin-like activity. Plays a major role in the degradation of misfolded proteins. The chain is ATP-dependent Clp protease proteolytic subunit 2 from Treponema denticola (strain ATCC 35405 / DSM 14222 / CIP 103919 / JCM 8153 / KCTC 15104).